A 32-amino-acid chain; its full sequence is Ranatuerin-2CSa (32 aa).

A disulfide bridge connects residues C27 and C32.

Expressed by the skin glands.

The protein resides in the secreted. Its subcellular location is the target cell membrane. Functionally, antibacterial peptide with amphipathic alpha-helical structure. Active against E.coli ATCC 25726 (MIC=4-5 uM) and S.aureus ATCC 25923 (MIC=8-10 uM). Has a weak hemolytic activity on human erythrocytes (LC(50)=150-160 uM). This is Ranatuerin-2CSa from Rana cascadae (Cascades frog).